The sequence spans 132 residues: Agouti-signaling protein (132 aa).

Positions 1–22 are cleaved as a signal peptide; it reads MDVTRLLLATLLVFLCFFTAYS. An N-linked (GlcNAc...) asparagine glycan is attached at N39. Residues 62-88 form a disordered region; sequence ISRKEAEKKRSSKKEASMKKVARPRTP. Residues 63 to 79 are compositionally biased toward basic and acidic residues; the sequence is SRKEAEKKRSSKKEASM. Cystine bridges form between C93/C108, C100/C114, C107/C125, C111/C132, and C116/C123. In terms of domain architecture, Agouti spans 93–132; that stretch reads CVATRDSCKPPAPACCDPCASCQCRFFRSACSCRVLSLNC.

The protein resides in the secreted. In terms of biological role, involved in the regulation of melanogenesis. The binding of ASP to MC1R precludes alpha-MSH initiated signaling and thus blocks production of cAMP, leading to a down-regulation of eumelanogenesis (brown/black pigment) and thus increasing synthesis of pheomelanin (yellow/red pigment). The protein is Agouti-signaling protein (ASIP) of Macaca radiata (Bonnet macaque).